The following is a 178-amino-acid chain: Inorganic pyrophosphatase (178 aa).

Substrate is bound by residues K30, R44, and Y56. Mg(2+) is bound by residues D66, D71, and D103. Y142 contacts substrate.

It belongs to the PPase family. As to quaternary structure, homohexamer. The cofactor is Mg(2+).

It localises to the cytoplasm. It carries out the reaction diphosphate + H2O = 2 phosphate + H(+). Its function is as follows. Catalyzes the hydrolysis of inorganic pyrophosphate (PPi) forming two phosphate ions. The chain is Inorganic pyrophosphatase from Xanthomonas axonopodis pv. citri (strain 306).